A 213-amino-acid chain; its full sequence is MSKEELLQELADAIISCKKDTVLAVVEKAKGELEPSEIIEKGLAAGMNEVGVRFERGKLFLPHVMMAADAMTAGVAALKDLMPEGASGSKLGVIVNGTVEGDVHDIGKAIVSTMLQSAGFEVHDIGRDVPIRNFIEKAKEVNADMIGISALMTTTLQGQKSVIELLKEEGLRDKVKVMVGGAPATQAWADKIGADCYAENATEAVAKAKELLA.

Residues 1–90 (MSKEELLQEL…LMPEGASGSK (90 aa)) form the B12-binding N-terminal domain. In terms of domain architecture, B12-binding spans 91 to 213 (LGVIVNGTVE…AVAKAKELLA (123 aa)). Residue H104 participates in methylcob(III)alamin binding.

Belongs to the methylamine corrinoid protein family. In terms of assembly, copurifies with MtbA.

It participates in one-carbon metabolism; methanogenesis from dimethylamine. Its function is as follows. Acts as a methyl group carrier between MtbB1 and MtbA. Binds 1 corrinoid cofactor per protein, is subsequently demethylated by MtbA. In Methanosarcina barkeri, this protein is Dimethylamine corrinoid protein.